The primary structure comprises 247 residues: NifU-like scaffold protein (247 aa).

This sequence belongs to the NifU family. In terms of assembly, homodimer.

The protein resides in the plastid. Its subcellular location is the apicoplast. Its pathway is cofactor biosynthesis; iron-sulfur cluster biosynthesis. Its function is as follows. Binds and transfers [4Fe-4S] iron-sulfur clusters to target proteins. This is NifU-like scaffold protein from Plasmodium falciparum (isolate 3D7).